A 529-amino-acid polypeptide reads, in one-letter code: Auxin response factor 13 (529 aa).

Positions 1-22 (MARPPAATAPPPPPPPPPPPPP) are disordered. A compositionally biased stretch (pro residues) spans 7 to 22 (ATAPPPPPPPPPPPPP). The segment at residues 128-234 (YAKQLTQSDA…KLLVGVRRAA (107 aa)) is a DNA-binding region (TF-B3). 2 disordered regions span residues 443–462 (IVTP…PLSA) and 497–529 (PEGV…GARL). A compositionally biased stretch (polar residues) spans 444–461 (VTPQNGSPPDNPVNTPLS). The span at 499-510 (GVDDETATEEAS) shows a compositional bias: acidic residues. Residues 511-523 (DTSLPDSLTNGHN) show a composition bias toward polar residues.

The protein belongs to the ARF family. Homo and heterodimers. Expressed in roots, culms, leaves and young panicles.

It is found in the nucleus. Auxin response factors (ARFs) are transcriptional factors that bind specifically to the DNA sequence 5'-TGTCTC-3' found in the auxin-responsive promoter elements (AuxREs). The chain is Auxin response factor 13 (ARF13) from Oryza sativa subsp. japonica (Rice).